A 355-amino-acid chain; its full sequence is S-adenosylmethionine:tRNA ribosyltransferase-isomerase (355 aa).

The protein belongs to the QueA family. Monomer.

The protein resides in the cytoplasm. It catalyses the reaction 7-aminomethyl-7-carbaguanosine(34) in tRNA + S-adenosyl-L-methionine = epoxyqueuosine(34) in tRNA + adenine + L-methionine + 2 H(+). It functions in the pathway tRNA modification; tRNA-queuosine biosynthesis. Its function is as follows. Transfers and isomerizes the ribose moiety from AdoMet to the 7-aminomethyl group of 7-deazaguanine (preQ1-tRNA) to give epoxyqueuosine (oQ-tRNA). The protein is S-adenosylmethionine:tRNA ribosyltransferase-isomerase of Pectobacterium carotovorum subsp. carotovorum (strain PC1).